We begin with the raw amino-acid sequence, 249 residues long: Probable transcriptional regulatory protein DICTH_1505 (249 aa).

This sequence belongs to the TACO1 family.

Its subcellular location is the cytoplasm. This Dictyoglomus thermophilum (strain ATCC 35947 / DSM 3960 / H-6-12) protein is Probable transcriptional regulatory protein DICTH_1505.